Consider the following 175-residue polypeptide: MGRTIENKQKIVTELKSLLDDSEMAVVLDYKGLTIKEMSDLRSRLQTNKGICKVTKNSLMRKAIDGNSNWTDLESLLTGTNAFVLIKEDVGGAVKAIQSFQKETKKSETKGALFEGRLLSQSEIKEIASLPSREVLMAKIAGALNGVATKIAISINEVPSGLARSLKQHSEKSES.

It belongs to the universal ribosomal protein uL10 family. In terms of assembly, part of the ribosomal stalk of the 50S ribosomal subunit. The N-terminus interacts with L11 and the large rRNA to form the base of the stalk. The C-terminus forms an elongated spine to which L12 dimers bind in a sequential fashion forming a multimeric L10(L12)X complex.

Its function is as follows. Forms part of the ribosomal stalk, playing a central role in the interaction of the ribosome with GTP-bound translation factors. In Prochlorococcus marinus (strain MIT 9515), this protein is Large ribosomal subunit protein uL10.